Consider the following 356-residue polypeptide: Ornithine cyclodeaminase (356 aa).

Residues Arg53 and Lys77 each contribute to the L-ornithine site. Residues Thr92, Arg120, 147–148 (AQ), Asp169, Thr209, 232–235 (VGGD), Lys239, and Ser300 each bind NAD(+). Arg120 serves as a coordination point for L-ornithine. Asp235 provides a ligand contact to L-ornithine. Asp235 (proton donor/acceptor) is an active-site residue. Residue Val301 coordinates L-ornithine.

This sequence belongs to the ornithine cyclodeaminase/mu-crystallin family. The cofactor is NAD(+).

The catalysed reaction is L-ornithine = L-proline + NH4(+). It functions in the pathway amino-acid biosynthesis; L-proline biosynthesis; L-proline from L-ornithine: step 1/1. With respect to regulation, is inhibited by L-proline and L-lysine. Is not activated by small concentrations of L-arginine, and is even inhibited by about 50% at 0.5 mM L-arginine. Its function is as follows. Catalyzes the conversion of L-ornithine into L-proline with release of ammonia. Is involved in the utilization of octopine, a catabolic pathway that proceeds through L-arginine and L-ornithine to L-proline. Octopine is a predominant opine in plant cells transformed with Ti plasmid pTiAch5. The sequence is that of Ornithine cyclodeaminase from Agrobacterium tumefaciens (strain Ach5).